The chain runs to 215 residues: Soluble inorganic pyrophosphatase (215 aa).

Over residues 1–21 the composition is skewed to low complexity; it reads MSQEDSTSAAAAQQPTSRPAP. The disordered stretch occupies residues 1 to 24; it reads MSQEDSTSAAAAQQPTSRPAPKLN. 3 residues coordinate Mg(2+): D103, D108, and D140.

It belongs to the PPase family. The cofactor is Mg(2+). As to expression, expressed in metabolically active tissue such as root, shoot, embryo and aleurone.

The protein resides in the cytoplasm. It carries out the reaction diphosphate + H2O = 2 phosphate + H(+). May play a role in germination. This is Soluble inorganic pyrophosphatase (IPP) from Hordeum vulgare subsp. vulgare (Domesticated barley).